The sequence spans 209 residues: Kynurenine formamidase (209 aa).

Phe18 serves as a coordination point for substrate. Zn(2+) contacts are provided by His48, His52, and Asp54. The Proton donor/acceptor role is filled by His58. The Zn(2+) site is built by His160 and Glu172.

It belongs to the Cyclase 1 superfamily. KynB family. In terms of assembly, homodimer. Zn(2+) serves as cofactor.

It catalyses the reaction N-formyl-L-kynurenine + H2O = L-kynurenine + formate + H(+). Its pathway is amino-acid degradation; L-tryptophan degradation via kynurenine pathway; L-kynurenine from L-tryptophan: step 2/2. In terms of biological role, catalyzes the hydrolysis of N-formyl-L-kynurenine to L-kynurenine, the second step in the kynurenine pathway of tryptophan degradation. The polypeptide is Kynurenine formamidase (Bordetella bronchiseptica (strain ATCC BAA-588 / NCTC 13252 / RB50) (Alcaligenes bronchisepticus)).